Reading from the N-terminus, the 258-residue chain is Thiazole synthase (258 aa).

Catalysis depends on lysine 96, which acts as the Schiff-base intermediate with DXP. 1-deoxy-D-xylulose 5-phosphate contacts are provided by residues glycine 157, 183 to 184 (AG), and 205 to 206 (NT).

Belongs to the ThiG family. In terms of assembly, homotetramer. Forms heterodimers with either ThiH or ThiS.

It is found in the cytoplasm. It catalyses the reaction [ThiS sulfur-carrier protein]-C-terminal-Gly-aminoethanethioate + 2-iminoacetate + 1-deoxy-D-xylulose 5-phosphate = [ThiS sulfur-carrier protein]-C-terminal Gly-Gly + 2-[(2R,5Z)-2-carboxy-4-methylthiazol-5(2H)-ylidene]ethyl phosphate + 2 H2O + H(+). It participates in cofactor biosynthesis; thiamine diphosphate biosynthesis. Catalyzes the rearrangement of 1-deoxy-D-xylulose 5-phosphate (DXP) to produce the thiazole phosphate moiety of thiamine. Sulfur is provided by the thiocarboxylate moiety of the carrier protein ThiS. In vitro, sulfur can be provided by H(2)S. The polypeptide is Thiazole synthase (Alkaliphilus metalliredigens (strain QYMF)).